A 463-amino-acid polypeptide reads, in one-letter code: A-type ATP synthase subunit B (463 aa).

Belongs to the ATPase alpha/beta chains family. As to quaternary structure, has multiple subunits with at least A(3), B(3), C, D, E, F, H, I and proteolipid K(x).

The protein localises to the cell membrane. In terms of biological role, component of the A-type ATP synthase that produces ATP from ADP in the presence of a proton gradient across the membrane. The B chain is a regulatory subunit. This is A-type ATP synthase subunit B from Thermococcus gammatolerans (strain DSM 15229 / JCM 11827 / EJ3).